A 443-amino-acid polypeptide reads, in one-letter code: ATP-dependent protease ATPase subunit HslU (443 aa).

ATP is bound by residues Ile-20, 62-67 (GVGKTE), Asp-255, Glu-321, and Arg-393.

It belongs to the ClpX chaperone family. HslU subfamily. A double ring-shaped homohexamer of HslV is capped on each side by a ring-shaped HslU homohexamer. The assembly of the HslU/HslV complex is dependent on binding of ATP.

The protein resides in the cytoplasm. ATPase subunit of a proteasome-like degradation complex; this subunit has chaperone activity. The binding of ATP and its subsequent hydrolysis by HslU are essential for unfolding of protein substrates subsequently hydrolyzed by HslV. HslU recognizes the N-terminal part of its protein substrates and unfolds these before they are guided to HslV for hydrolysis. The polypeptide is ATP-dependent protease ATPase subunit HslU (Helicobacter pylori (strain J99 / ATCC 700824) (Campylobacter pylori J99)).